The primary structure comprises 2440 residues: Nuclear receptor corepressor 1 (2440 aa).

A compositionally biased stretch (polar residues) spans 1–18 (MSSSGYPPNQGAFSTEQS). Disordered regions lie at residues 1 to 177 (MSSS…SKLS) and 206 to 231 (QQQL…VEQK). Residues 1–373 (MSSSGYPPNQ…QRGAGLSATI (373 aa)) are interaction with ZBTB33 and HEXIM1. The segment covering 51-64 (SQASQLLQQQQQQQ) has biased composition (low complexity). 3 stretches are compositionally biased toward basic and acidic residues: residues 77 to 88 (PGSDRPQERRTS), 99 to 119 (VDHD…DSHF), and 141 to 155 (ADAK…KHEA). The residue at position 172 (serine 172) is a Phosphoserine. Residues 174-216 (SKLSKEELIQSMDRVDREIAKVEQQILKLKKKQQQLEEEAAKP) are a coiled coil. The segment covering 212 to 221 (EAAKPPEPEK) has biased composition (basic and acidic residues). Residue serine 224 is modified to Phosphoserine. The interval 254-312 (FEGLGPKVELPLYNQPSDTKVYHENIKTNQVMRKKLILFFKRRNHARKQREQKICQRYD) is interaction with SIN3A/B. Positions 299 to 328 (ARKQREQKICQRYDQLMEAWEKKVDRIENN) form a coiled coil. The region spanning 435 to 486 (QFMNVWTDHEKEIFKDKFIQHPKNFGLIASYLERKSVPDCVLYYYLTKKNEN) is the SANT 1 domain. Disordered stretches follow at residues 497–632 (KRRG…TEEE) and 677–915 (NLLQ…GSIL). The stretch at 501-557 (RNQQIARPSQEEKVEEKEEDKAEKTEKKEEEKKDEEEKDEKEDSKENTKEKDKIDGT) forms a coiled coil. Basic and acidic residues-rich tracts occupy residues 509–531 (SQEE…KEEE) and 541–556 (KEDS…KIDG). A compositionally biased stretch (low complexity) spans 592–605 (EAAAASAAAAAATE). Residues 606–617 (EPPPPLPPPPEP) are compositionally biased toward pro residues. The SANT 2 domain occupies 623–674 (VETSRWTEEEMEVAKKGLVEHGRNWAAIAKMVGTKSEAQCKNFYFNYKRRHN). Positions 698–708 (QCESVASTVSA) are enriched in polar residues. Acidic residues predominate over residues 709–728 (QEDEDIEASNEEENPEDSEV). Residues 752-768 (ELEPTTETAPSTSPSLA) are compositionally biased toward low complexity. The segment covering 781 to 792 (ETQVNDSISAET) has biased composition (polar residues). Basic and acidic residues predominate over residues 820 to 859 (DSVDVEVRVPENHASKVEGDNTKERDLDRASEKVEPRDED). Composition is skewed to polar residues over residues 864–883 (QQIN…SATC) and 906–915 (SLLNPTGSIL). The interaction with ETO stretch occupies residues 988–1816 (RSSTSPCGTS…QGLPASRYNT (829 aa)). A Phosphoserine modification is found at serine 999. A disordered region spans residues 1022-1046 (VRLPTTRPTRPPPPLIPSSKTTVAS). Residue lysine 1106 forms a Glycyl lysine isopeptide (Lys-Gly) (interchain with G-Cter in SUMO1); alternate linkage. Lysine 1106 participates in a covalent cross-link: Glycyl lysine isopeptide (Lys-Gly) (interchain with G-Cter in SUMO2); alternate. Serine 1111 is subject to Phosphoserine. Lysine 1184 is covalently cross-linked (Glycyl lysine isopeptide (Lys-Gly) (interchain with G-Cter in SUMO2)). A disordered region spans residues 1184-1204 (KGSISRMPIEDSSPEKGREEA). A phosphoserine mark is found at serine 1195, serine 1196, serine 1249, serine 1263, serine 1281, and serine 1322. Position 1336 is an N6-acetyllysine (lysine 1336). Threonine 1367 carries the post-translational modification Phosphothreonine. Lysine 1389 is covalently cross-linked (Glycyl lysine isopeptide (Lys-Gly) (interchain with G-Cter in SUMO2)). Lysine 1412 is covalently cross-linked (Glycyl lysine isopeptide (Lys-Gly) (interchain with G-Cter in SUMO2); alternate). The residue at position 1412 (lysine 1412) is an N6-acetyllysine; alternate. A disordered region spans residues 1440–1459 (AGETVRSRHTSVVSSGPSVL). Phosphoserine is present on residues serine 1450 and serine 1472. Positions 1488-1512 (YQNTMSRGSPMMNRTSDVTISSNKS) are enriched in polar residues. Residues 1488-1554 (YQNTMSRGSP…SPFDPHHRGS (67 aa)) are disordered. The interval 1501–2440 (RTSDVTISSN…QYETLSDSDD (940 aa)) is interaction with C1D. Residue lysine 1518 forms a Glycyl lysine isopeptide (Lys-Gly) (interchain with G-Cter in SUMO2) linkage. A Phosphoserine modification is found at serine 1592. 2 disordered regions span residues 1690-1759 (PRPY…SPSP) and 1884-1922 (SSAF…LRTR). Composition is skewed to basic and acidic residues over residues 1712 to 1729 (AERE…RERI) and 1903 to 1921 (AGKD…ELRT). Positions 1933–1937 (IDVII) match the CORNR box 1 motif. Residues 1943-1969 (SDKDARERGSQSSDSSSSLSSHRYETP) are disordered. Residues 1952–1963 (SQSSDSSSSLSS) show a composition bias toward low complexity. Serine 1977 and serine 1981 each carry phosphoserine. Residues 2006–2041 (PTRQYEGPLHHYRPQQESPSPQQQLPPSSQAEGMGQ) form a disordered region. Over residues 2020 to 2035 (QQESPSPQQQLPPSSQ) the composition is skewed to low complexity. The ID1 stretch occupies residues 2032-2115 (PSSQAEGMGQ…QAQSVHHQRP (84 aa)). A required for interaction with RARA in the absence of its ligand region spans residues 2047–2050 (RLIT). The CORNR box 2 signature appears at 2055 to 2059 (ICQII). The segment covering 2067–2086 (QVSSQTPQQPPTSTFQNSPS) has biased composition (low complexity). Residues 2067-2155 (QVSSQTPQQP…PYEPISPPQV (89 aa)) form a disordered region. Polar residues predominate over residues 2087–2110 (ALVSTPVRTKTSNRYSPESQAQSV). Phosphoserine occurs at positions 2102, 2120, 2136, 2151, and 2184. Residues 2124 to 2142 (LVDKSRGSRPGKSPERSHV) are compositionally biased toward basic and acidic residues. The tract at residues 2212–2273 (IFRKLNSSGG…EDIIRKALMG (62 aa)) is ID2. The short motif at 2263-2267 (LEDII) is the CORNR box 3 element. A disordered region spans residues 2287–2440 (SQPMGVVPGT…QYETLSDSDD (154 aa)). Over residues 2296–2305 (TANTSVVTSG) the composition is skewed to polar residues. Threonine 2399 is modified (phosphothreonine). 2 stretches are compositionally biased toward polar residues: residues 2407 to 2418 (AVNQAAPHQQNR) and 2431 to 2440 (QYETLSDSDD). Serine 2436 and serine 2438 each carry phosphoserine.

It belongs to the N-CoR nuclear receptor corepressors family. As to quaternary structure, forms a large corepressor complex that contains SIN3A/B and histone deacetylases HDAC1 and HDAC2. This complex associates with the thyroid receptor (TR) and the retinoid acid receptor (RAR) in the absence of ligand. Interacts directly with RARA; the interaction is facilitated with RARA trimethylation. Component of the N-Cor repressor complex, at least composed of CBFA2T3, HEXIM1, NCOR1, NCOR2, HDAC3, TBL1X, TBL1XR1, CORO2A and GPS2. Interacts with ZBTB33; the interaction serves to recruit the N-CoR complex to promoter regions containing methylated CpG dinucleotides. Interacts with TRIM28 and KDM3A. Interacts (via the RD1 domain) with BAZ1A (via its N-terminal); the interaction corepresses a number of NCOR1-regulated genes. Interacts with BCL6, C1D, DACH1, HEXIM1, HDAC7, RORA, RORC, SAP30, SIAH2, SIN3A and SIN3B. May interact with DEAF1. Interacts with RXRA. Interacts with SETD5. Interacts with VDR. Interacts with ZBTB7A. Interacts with AR. Interacts with HDAC3. Post-translationally, ubiquitinated; mediated by SIAH2 and leading to its subsequent proteasomal degradation.

Its subcellular location is the nucleus. Mediates transcriptional repression by certain nuclear receptors. Part of a complex which promotes histone deacetylation and the formation of repressive chromatin structures which may impede the access of basal transcription factors. Participates in the transcriptional repressor activity produced by BCL6. Recruited by ZBTB7A to the androgen response elements/ARE on target genes, negatively regulates androgen receptor signaling and androgen-induced cell proliferation. Mediates the NR1D1-dependent repression and circadian regulation of TSHB expression. The NCOR1-HDAC3 complex regulates the circadian expression of the core clock gene ARTNL/BMAL1 and the genes involved in lipid metabolism in the liver. In Homo sapiens (Human), this protein is Nuclear receptor corepressor 1 (NCOR1).